A 110-amino-acid chain; its full sequence is UPF0060 membrane protein MT2717 (110 aa).

Transmembrane regions (helical) follow at residues 6–26 (ILLF…VWQG), 32–52 (GWLW…FATL), 61–81 (VLAA…MALD), and 90–110 (VIGA…PRGH).

This sequence belongs to the UPF0060 family.

It is found in the cell membrane. The protein is UPF0060 membrane protein MT2717 of Mycobacterium tuberculosis (strain CDC 1551 / Oshkosh).